The following is a 213-amino-acid chain: LexA repressor (213 aa).

Residues 27-47 (QTEIARAFGFKGIRAAQYHLE) constitute a DNA-binding region (H-T-H motif). Catalysis depends on for autocatalytic cleavage activity residues S133 and K170.

Belongs to the peptidase S24 family. As to quaternary structure, homodimer.

The enzyme catalyses Hydrolysis of Ala-|-Gly bond in repressor LexA.. Its function is as follows. Represses a number of genes involved in the response to DNA damage (SOS response), including recA and lexA. Has been shown to bind to the palindromic sequence 5'-CTG-N(8-12)-C-[TC]-G. In the presence of single-stranded DNA, RecA interacts with LexA causing an autocatalytic cleavage which disrupts the DNA-binding part of LexA, leading to derepression of the SOS regulon and eventually DNA repair. In Xanthomonas citri (Xanthomonas campestris pv. citri), this protein is LexA repressor.